A 783-amino-acid chain; its full sequence is Serine/threonine-protein kinase SIK1 (783 aa).

The Protein kinase domain maps to 27–278 (YDIERTLGKG…IAQIRQHRWM (252 aa)). Residues 33–41 (LGKGNFAVV) and K56 each bind ATP. The active-site Proton acceptor is the D149. Residue T182 is modified to Phosphothreonine; by LKB1 and GSK3-beta. Residue S186 is modified to Phosphoserine; by autocatalysis. The UBA domain maps to 303–343 (DYDEQALGIMQTLGVDRQRTVESLQNSSYNHFAAIYYLLLE). At T322 the chain carries Phosphothreonine; by CaMK1. Disordered regions lie at residues 353–377 (CARP…VPQE) and 449–477 (RQGP…LAEV). T473 bears the Phosphothreonine; by PKA mark. S575 carries the post-translational modification Phosphoserine; by PKA. The segment at 583–612 (LKAFRQQLRKTTRTKGFLGLNKIKGLARQV) is RK-rich region; required for cAMP responsiveness and nuclear localization. A disordered region spans residues 619-643 (RASRGGLSPFHAPAQSPGLHGGAAG).

The protein belongs to the protein kinase superfamily. CAMK Ser/Thr protein kinase family. AMPK subfamily. Interacts with ATP1A1. Interacts (when phosphorylated on Thr-182 and Ser-186) with YWHAZ. Interacts (when phosphorylated at Thr-473 and/or Ser-575) with 14-3-3 proteins; the interaction inhibits kinase activity towards TORCs. There is a cooperative effect of the phosphorylation sites in 14-3-3 binding as the interaction is stronger when both Thr-473 and Ser-575 are modified. The cofactor is Mg(2+). Phosphorylated at Thr-182 by STK11/LKB1 in complex with STE20-related adapter-alpha (STRADA) pseudo kinase and CAB39, leading to its activation. Phosphorylation at Thr-182 promotes autophosphorylation at Ser-186, which is required for sustained activity. Autophosphorylation at Ser-186 is maintained by sequential phosphorylation at Thr-182 by GSK3-beta. GSK3-beta cannot initiate phosphorylation at Thr-182, it can only maintain it. Phosphorylation at Ser-575 in response to cAMP signaling promotes translocation to the cytoplasm. Phosphorylation at Thr-322 by CaMK1 following intracellular sodium concentration leads to activation.

It is found in the cytoplasm. It localises to the nucleus. It carries out the reaction L-seryl-[protein] + ATP = O-phospho-L-seryl-[protein] + ADP + H(+). It catalyses the reaction L-threonyl-[protein] + ATP = O-phospho-L-threonyl-[protein] + ADP + H(+). Its activity is regulated as follows. Activated by phosphorylation on Thr-182. Also activated by phosphorylation on Thr-322 in response to increases in intracellular sodium in parallel with elevations in intracellular calcium through the reversible sodium/calcium exchanger. Inhibited by phosphorylation at Thr-473 and Ser-575, probably by PKA, which triggers interaction with 14-3-3 proteins. Functionally, serine/threonine-protein kinase involved in various processes such as cell cycle regulation, gluconeogenesis and lipogenesis regulation, muscle growth and differentiation and tumor suppression. Phosphorylates HDAC4, HDAC5, PPME1, SREBF1, CRTC1/TORC1. Inhibits CREB activity by phosphorylating and inhibiting activity of TORCs, the CREB-specific coactivators, like CRTC2/TORC2 and CRTC3/TORC3 in response to cAMP signaling. Acts as a tumor suppressor and plays a key role in p53/TP53-dependent anoikis, a type of apoptosis triggered by cell detachment: required for phosphorylation of p53/TP53 in response to loss of adhesion and is able to suppress metastasis. Part of a sodium-sensing signaling network, probably by mediating phosphorylation of PPME1: following increases in intracellular sodium, SIK1 is activated by CaMK1 and phosphorylates PPME1 subunit of protein phosphatase 2A (PP2A), leading to dephosphorylation of sodium/potassium-transporting ATPase ATP1A1 and subsequent increase activity of ATP1A1. Acts as a regulator of muscle cells by phosphorylating and inhibiting class II histone deacetylases HDAC4 and HDAC5, leading to promote expression of MEF2 target genes in myocytes. Also required during cardiomyogenesis by regulating the exit of cardiomyoblasts from the cell cycle via down-regulation of CDKN1C/p57Kip2. Acts as a regulator of hepatic gluconeogenesis by phosphorylating and repressing the CREB-specific coactivators CRTC1/TORC1 and CRTC2/TORC2, leading to inhibit CREB activity. Also regulates hepatic lipogenesis by phosphorylating and inhibiting SREBF1. In concert with CRTC1/TORC1, regulates the light-induced entrainment of the circadian clock by attenuating PER1 induction; represses CREB-mediated transcription of PER1 by phosphorylating and deactivating CRTC1/TORC1. In Homo sapiens (Human), this protein is Serine/threonine-protein kinase SIK1 (SIK1).